A 209-amino-acid chain; its full sequence is MARYCGPKNRIARRFGANIFGRGRNPLLRKPNPPGQHGMQRKKKSDYGLQLEEKQKLKACYGMILEKQLVKAYKEVVNKQGNVAQMFLEKFECRLDSIVYRLGFAKTIFAAQQLVSHGHVLVNGKKVDRRSFFVRPGMQISLKEKSKRLAIVTESLENKDQSSLPAYLSLDKAAFKGELVVAPELDQIASQLPLPVNVSVICEFLSHRT.

The segment at 22 to 45 is disordered; it reads RGRNPLLRKPNPPGQHGMQRKKKS. Positions 93-154 constitute an S4 RNA-binding domain; that stretch reads CRLDSIVYRL…KSKRLAIVTE (62 aa).

Belongs to the universal ribosomal protein uS4 family. Part of the 30S ribosomal subunit. Contacts protein S5. The interaction surface between S4 and S5 is involved in control of translational fidelity.

Its function is as follows. One of the primary rRNA binding proteins, it binds directly to 16S rRNA where it nucleates assembly of the body of the 30S subunit. Functionally, with S5 and S12 plays an important role in translational accuracy. The chain is Small ribosomal subunit protein uS4 from Chlamydia trachomatis serovar L2 (strain ATCC VR-902B / DSM 19102 / 434/Bu).